We begin with the raw amino-acid sequence, 296 residues long: Elongation factor Ts (296 aa).

The segment at 79–82 (TDFV) is involved in Mg(2+) ion dislocation from EF-Tu.

It belongs to the EF-Ts family.

The protein resides in the cytoplasm. Associates with the EF-Tu.GDP complex and induces the exchange of GDP to GTP. It remains bound to the aminoacyl-tRNA.EF-Tu.GTP complex up to the GTP hydrolysis stage on the ribosome. This chain is Elongation factor Ts (tsf), found in Spiroplasma citri.